A 319-amino-acid polypeptide reads, in one-letter code: Cytochrome f (319 aa).

The first 35 residues, 1 to 35, serve as a signal peptide directing secretion; that stretch reads MFQQMQKISLKLLKTTFLFLFATFILVGLPSTSQA. Heme-binding residues include Tyr-36, Cys-56, Cys-59, and His-60. Residues 285–305 form a helical membrane-spanning segment; it reads IQGLIAFFISVIIAQTFLVLK.

It belongs to the cytochrome f family. As to quaternary structure, the 4 large subunits of the cytochrome b6-f complex are cytochrome b6, subunit IV (17 kDa polypeptide, petD), cytochrome f and the Rieske protein, while the 4 small subunits are PetG, PetL, PetM and PetN. The complex functions as a dimer. The cofactor is heme.

It is found in the plastid. The protein resides in the chloroplast thylakoid membrane. Component of the cytochrome b6-f complex, which mediates electron transfer between photosystem II (PSII) and photosystem I (PSI), cyclic electron flow around PSI, and state transitions. This Chlorokybus atmophyticus (Soil alga) protein is Cytochrome f.